The following is a 264-amino-acid chain: MSNILTEICATKARHVADKKKHISETDLYNLTKNQTAPRGFRAALDKKRAEGKFSLIAEIKKASPSKGLIRPDFEPILHARSYQEGGAACLSVLTDQPYFQGHEDYLIAARNEVTLPVLRKDFMIDPWQVTEARAIGADAILIIVAALEDNQMQEIEAAALEYGMDALIEVHSTQEMERALRLKSRLIGVNNRDLRDFSVSFDRTYELIKQAPKECTFVAESGIQTHDDLVAMNQHNIGCFLVGETLMRQKDVKQATRDLLGLN.

Belongs to the TrpC family.

It catalyses the reaction 1-(2-carboxyphenylamino)-1-deoxy-D-ribulose 5-phosphate + H(+) = (1S,2R)-1-C-(indol-3-yl)glycerol 3-phosphate + CO2 + H2O. Its pathway is amino-acid biosynthesis; L-tryptophan biosynthesis; L-tryptophan from chorismate: step 4/5. The polypeptide is Indole-3-glycerol phosphate synthase (trpC) (Zymomonas mobilis subsp. pomaceae (strain ATCC 29192 / DSM 22645 / JCM 10191 / CCUG 17912 / NBRC 13757 / NCIMB 11200 / NRRL B-4491 / Barker I)).